The primary structure comprises 192 residues: Flavin prenyltransferase UbiX (192 aa).

FMN contacts are provided by residues 10–12, Ser-36, 92–95, and Arg-127; these read GAS and SMTT. Dimethylallyl phosphate-binding residues include Tyr-157 and Lys-173.

The protein belongs to the UbiX/PAD1 family.

The catalysed reaction is dimethylallyl phosphate + FMNH2 = prenylated FMNH2 + phosphate. In terms of biological role, flavin prenyltransferase that catalyzes the synthesis of the prenylated FMN cofactor (prenyl-FMN) for 4-hydroxy-3-polyprenylbenzoic acid decarboxylase UbiD. The prenyltransferase is metal-independent and links a dimethylallyl moiety from dimethylallyl monophosphate (DMAP) to the flavin N5 and C6 atoms of FMN. The protein is Flavin prenyltransferase UbiX of Chlamydia pneumoniae (Chlamydophila pneumoniae).